Here is a 316-residue protein sequence, read N- to C-terminus: tRNA dimethylallyltransferase (316 aa).

27-34 (GATATGKT) contacts ATP. Residue 29 to 34 (TATGKT) coordinates substrate. The interval 52–55 (DSRQ) is interaction with substrate tRNA.

The protein belongs to the IPP transferase family. As to quaternary structure, monomer. Mg(2+) serves as cofactor.

It catalyses the reaction adenosine(37) in tRNA + dimethylallyl diphosphate = N(6)-dimethylallyladenosine(37) in tRNA + diphosphate. Catalyzes the transfer of a dimethylallyl group onto the adenine at position 37 in tRNAs that read codons beginning with uridine, leading to the formation of N6-(dimethylallyl)adenosine (i(6)A). In Treponema pallidum (strain Nichols), this protein is tRNA dimethylallyltransferase.